Reading from the N-terminus, the 67-residue chain is Conotoxin TsMMSK-011 (67 aa).

The signal sequence occupies residues methionine 1–proline 22. Positions methionine 23–valine 50 are excised as a propeptide. 3 disulfide bridges follow: cysteine 53–cysteine 65, cysteine 54–cysteine 61, and cysteine 58–cysteine 64. Position 63 is a 4-hydroxyproline (proline 63).

The protein belongs to the conotoxin M superfamily. As to expression, expressed by the venom duct.

Its subcellular location is the secreted. The protein is Conotoxin TsMMSK-011 of Conus tessulatus (Tessellate cone).